Reading from the N-terminus, the 352-residue chain is UDP-N-acetylglucosamine--N-acetylmuramyl-(pentapeptide) pyrophosphoryl-undecaprenol N-acetylglucosamine transferase (352 aa).

Residues Ser-195 and Gln-287 each coordinate UDP-N-acetyl-alpha-D-glucosamine.

This sequence belongs to the glycosyltransferase 28 family. MurG subfamily.

The protein localises to the cell membrane. It carries out the reaction Mur2Ac(oyl-L-Ala-gamma-D-Glu-L-Lys-D-Ala-D-Ala)-di-trans,octa-cis-undecaprenyl diphosphate + UDP-N-acetyl-alpha-D-glucosamine = beta-D-GlcNAc-(1-&gt;4)-Mur2Ac(oyl-L-Ala-gamma-D-Glu-L-Lys-D-Ala-D-Ala)-di-trans,octa-cis-undecaprenyl diphosphate + UDP + H(+). It functions in the pathway cell wall biogenesis; peptidoglycan biosynthesis. In terms of biological role, cell wall formation. Catalyzes the transfer of a GlcNAc subunit on undecaprenyl-pyrophosphoryl-MurNAc-pentapeptide (lipid intermediate I) to form undecaprenyl-pyrophosphoryl-MurNAc-(pentapeptide)GlcNAc (lipid intermediate II). The polypeptide is UDP-N-acetylglucosamine--N-acetylmuramyl-(pentapeptide) pyrophosphoryl-undecaprenol N-acetylglucosamine transferase (Streptococcus pneumoniae (strain ATCC BAA-255 / R6)).